Here is a 333-residue protein sequence, read N- to C-terminus: L-lactate dehydrogenase A chain (333 aa).

NAD(+)-binding positions include 30–58 (GMVG…MEDK) and Arg100. 3 residues coordinate substrate: Arg107, Asn139, and Arg170. Asn139 provides a ligand contact to NAD(+). The active-site Proton acceptor is His194. Thr249 contacts substrate.

Belongs to the LDH/MDH superfamily. LDH family. Homotetramer.

It localises to the cytoplasm. The catalysed reaction is (S)-lactate + NAD(+) = pyruvate + NADH + H(+). The protein operates within fermentation; pyruvate fermentation to lactate; (S)-lactate from pyruvate: step 1/1. This chain is L-lactate dehydrogenase A chain (ldha), found in Cyprinus carpio (Common carp).